The sequence spans 365 residues: Holliday junction branch migration complex subunit RuvB (365 aa).

The large ATPase domain (RuvB-L) stretch occupies residues 1–191 (MSPELGGGYD…FGFTAHMDFY (191 aa)). ATP contacts are provided by residues Leu30, Arg31, Gly72, Lys75, Thr76, Ser77, 138–140 (EDF), Arg181, Tyr191, and Arg228. Thr76 contributes to the Mg(2+) binding site. The small ATPAse domain (RuvB-S) stretch occupies residues 192–262 (EPAELKQILM…IAHAALAVYD (71 aa)). Residues 265 to 365 (QLGLDRLDRS…QASLFDPEDP (101 aa)) are head domain (RuvB-H). The DNA site is built by Arg320 and Arg325.

The protein belongs to the RuvB family. In terms of assembly, homohexamer. Forms an RuvA(8)-RuvB(12)-Holliday junction (HJ) complex. HJ DNA is sandwiched between 2 RuvA tetramers; dsDNA enters through RuvA and exits via RuvB. An RuvB hexamer assembles on each DNA strand where it exits the tetramer. Each RuvB hexamer is contacted by two RuvA subunits (via domain III) on 2 adjacent RuvB subunits; this complex drives branch migration. In the full resolvosome a probable DNA-RuvA(4)-RuvB(12)-RuvC(2) complex forms which resolves the HJ.

The protein resides in the cytoplasm. The catalysed reaction is ATP + H2O = ADP + phosphate + H(+). In terms of biological role, the RuvA-RuvB-RuvC complex processes Holliday junction (HJ) DNA during genetic recombination and DNA repair, while the RuvA-RuvB complex plays an important role in the rescue of blocked DNA replication forks via replication fork reversal (RFR). RuvA specifically binds to HJ cruciform DNA, conferring on it an open structure. The RuvB hexamer acts as an ATP-dependent pump, pulling dsDNA into and through the RuvAB complex. RuvB forms 2 homohexamers on either side of HJ DNA bound by 1 or 2 RuvA tetramers; 4 subunits per hexamer contact DNA at a time. Coordinated motions by a converter formed by DNA-disengaged RuvB subunits stimulates ATP hydrolysis and nucleotide exchange. Immobilization of the converter enables RuvB to convert the ATP-contained energy into a lever motion, pulling 2 nucleotides of DNA out of the RuvA tetramer per ATP hydrolyzed, thus driving DNA branch migration. The RuvB motors rotate together with the DNA substrate, which together with the progressing nucleotide cycle form the mechanistic basis for DNA recombination by continuous HJ branch migration. Branch migration allows RuvC to scan DNA until it finds its consensus sequence, where it cleaves and resolves cruciform DNA. The polypeptide is Holliday junction branch migration complex subunit RuvB (Rhodococcus opacus (strain B4)).